The following is a 236-amino-acid chain: uncharacterized protein (236 aa).

A compositionally biased stretch (basic residues) spans 1–12 (MKLLGHRKSHGH). The segment at 1 to 108 (MKLLGHRKSH…KAANRARMTE (108 aa)) is disordered. A compositionally biased stretch (basic and acidic residues) spans 13 to 31 (QRADASPDAGSKDGCRPDS). Low complexity predominate over residues 32–47 (GRTSGSDTSRGSQTTG). The segment covering 52–65 (PTPKRNQSRRHTKK) has biased composition (basic residues). Residues 67-78 (PVAPAPMTAAQA) show a composition bias toward low complexity. Over residues 90 to 108 (LSREERRAEKAANRARMTE) the composition is skewed to basic and acidic residues. 2 helical membrane-spanning segments follow: residues 142 to 162 (NLLGLFMPSALTLLFVMFAVP) and 166 to 186 (FYLSPAMLILLALMTIDAIIL).

It localises to the cell membrane. This is an uncharacterized protein from Mycobacterium tuberculosis (strain CDC 1551 / Oshkosh).